The primary structure comprises 209 residues: Thymidylate kinase (209 aa).

10–17 is a binding site for ATP; that stretch reads GPEGAGKT.

It belongs to the thymidylate kinase family.

It catalyses the reaction dTMP + ATP = dTDP + ADP. In terms of biological role, phosphorylation of dTMP to form dTDP in both de novo and salvage pathways of dTTP synthesis. The chain is Thymidylate kinase from Anoxybacillus flavithermus (strain DSM 21510 / WK1).